Consider the following 1088-residue polypeptide: MGKYNLILSEYLSFIYNSQSAVQIPIYYSSNSELESRCIEFHSKCLENSKNGLSLKKLFSEYSDVIENATLLSILSYSYDKYNAVERKLVKYAKSKPLEADLTLNELDYENNKITSELFPTEEEYTDSLMDPAILTSLSSNLNAVMFWLEKHENDTAEKLKIYKRRLDLFSIVASTINKYGVPRHNAKYRYEYDVMKDKPYYLVTWANSSIEMLMSVFSHEDYLIAKELIVLSYSNRSTLAKLVSSPMSILVALVDINGTFITNEELELEFSNKYVRAIVPDQTFDELKQMLDNMRKAGLVDIPKMIQDWLVDCSIERFPLMAKIYSWSFHVGFRKQKMLDAALDQLKTEYTENVDDEMYREYTMLIRDEVVKMLEESVKHDDHLLQDSELAGLLSMSSASNGESRQLKFGRKTIFSTKKNMHVMDDMANGRYTPGIIPPVNADKPIPLGRRDVPGRRTRIIFILPYEYFIAQHAVVEKMLIYAKHTREYAEFYSQSNQLLSYGDVTRFLSNNSMVLYTDVSQWDSSQHNTQPFRKGIIMGLDILANMTNDARVIQTLNLYKQTQINLMDSYVQIPDGNVIKKIQYGAVASGEKQTKAANSIANLALIKTVLSRISNKYSFITKIIRVDGDDNYAVLQFNTEVTKQMVQDVSNDVRETYARMNAKVKALVSTVGIEIAKRYIAGGKIFFRAGINLLNNEKRGQSTQWDQAAVLYSNYIVNRLRGFETDREFILTKIMQMTSVAITGSLRLFPSERVLTTNSTFKVFDSEDFIIEYGTTDDEVYIQRAFMSLSSQKSGIADEISASSTFKNYVSKLSEQLLFSKNNIVSRGIALTEKAKLNSYAPISLEKRRAQISALLTMLQKPVTFKSSKITINDILKDIKPFFTLSEAHLPMQYQKFMPNLPENVQYIIQCIGSRTYQIEDDGSKSAISRLISKYSVYKPSIEELYKVISLHENEIQLYLISLGIPKIDADTYVGSKIYSQDKYRILESYVYNLLSINYGCYQLFDFNSPDLEKLIRIPFKGKIPAVTFILHLYAKLEVINYAIKNGSWISLFCNYPKSEMIKLWKKMWNITSLRSPYTNANFFQD.

In terms of domain architecture, RdRp catalytic spans 501–687 (LSYGDVTRFL…AKRYIAGGKI (187 aa)).

This sequence belongs to the reoviridae RNA-directed RNA polymerase family. In terms of assembly, interacts with VP3 (Potential). Interacts with VP2; this interaction activates VP1. Interacts with NSP5; this interaction is probably necessary for the formation of functional virus factories. Interacts with NSP2; this interaction is weak. It depends on Mg(2+) as a cofactor.

It localises to the virion. It catalyses the reaction RNA(n) + a ribonucleoside 5'-triphosphate = RNA(n+1) + diphosphate. In terms of biological role, RNA-directed RNA polymerase that is involved in both transcription and genome replication. Together with VP3 capping enzyme, forms an enzyme complex positioned near the channels situated at each of the five-fold vertices of the core. Following infection, the outermost layer of the virus is lost, leaving a double-layered particle (DLP) made up of the core and VP6 shell. VP1 then catalyzes the transcription of fully conservative plus-strand genomic RNAs that are extruded through the DLP's channels into the cytoplasm where they function as mRNAs for translation of viral proteins. One copy of each of the viral (+)RNAs is also recruited during core assembly, together with newly synthesized polymerase complexes and VP2. The polymerase of these novo-formed particles catalyzes the synthesis of complementary minus-strands leading to dsRNA formation. To do so, the polymerase specifically recognizes and binds 4 bases 5'-UGUG-3' in the conserved 3'-sequence of plus-strand RNA templates. VP2 presumably activates the autoinhibited VP1-RNA complex to coordinate packaging and genome replication. Once dsRNA synthesis is complete, the polymerase switches to the transcriptional mode, thus providing secondary transcription. In Homo sapiens (Human), this protein is RNA-directed RNA polymerase.